Consider the following 405-residue polypeptide: MANIVVKRLERTPIDETPVEIVERKGIGHPDSICDGIAESVSVALCKMYKEKMGVVLHHNTDQVELVGGYAYPELGGGCMVSPIYVLLSGRATMEVLDKKSGKIIKLPVNTTAVNAARDYLKKAIRNMDLEKDVVVDCRIGQGSVDLVEVFDRKRSEIPHANDTSFGVGHAPLSTTEKIVLETEKLLNSDALKAEIPAVGEDIKVMGLREGKKITLTIAMAAVDKYVNSCADYVKVKELAKAKVEENAKKYLDSHELEVCINTADDDEDCIFLTVTGTSAEMGDDGSVGRGNRANGLITPFRPMSMEATSGKNPINHIGKIYNILSNIIAEDVAKIEGVRECQIRILSQIGKPITEPKILDIEMIPENGFELEELSPKAKEVAQKWLENISEVTERIVSGNVTTF.

141–146 (GQGSVD) lines the ATP pocket.

It belongs to the AdoMet synthase 2 family. It depends on Mg(2+) as a cofactor.

The enzyme catalyses L-methionine + ATP + H2O = S-adenosyl-L-methionine + phosphate + diphosphate. It functions in the pathway amino-acid biosynthesis; S-adenosyl-L-methionine biosynthesis; S-adenosyl-L-methionine from L-methionine: step 1/1. Catalyzes the formation of S-adenosylmethionine from methionine and ATP. This is S-adenosylmethionine synthase from Methanococcus maripaludis (strain C5 / ATCC BAA-1333).